We begin with the raw amino-acid sequence, 3674 residues long: Dystrophin-1 (3674 aa).

The interval 1–25 (MLFSGASTAKPKKDEKKDKKSDRDP) is disordered. Positions 11-25 (PKKDEKKDKKSDRDP) are enriched in basic and acidic residues. The segment at 30–39 (QEWVFVRWAN) is actin-binding. The Calponin-homology (CH) domain maps to 129 to 234 (EKLSEAIKQW…YLMSLYLAMI (106 aa)). Residues 265 to 325 (SQPSTSSSSA…KSGKSKKARR (61 aa)) are disordered. Spectrin repeat units lie at residues 327–435 (EQLA…VLQQ), 436–541 (QIHL…KLDG), and 612–656 (CELV…TLVK). Residues 655 to 674 (VKSGKADVKQVQESQNEQKE) show a composition bias toward basic and acidic residues. Disordered stretches follow at residues 655–689 (VKSG…TEGE), 968–991 (NSQM…EKRR), 1587–1606 (ASAE…SSPS), 1796–1833 (LSAT…SRSS), and 2387–2466 (MNDS…GSTG). Residues 675–685 (QPASSEGLSTD) show a composition bias toward polar residues. Residues 975–991 (TVEKAETRKAEMEEKRR) show a composition bias toward basic and acidic residues. Positions 1796–1830 (LSATEKKPVETVKSTIPDRPEVPEEPEKSSPDRTS) are enriched in basic and acidic residues. Positions 2391 to 2411 (GGDTTESRSTVVEMTSVHTKQ) are enriched in polar residues. Spectrin repeat units lie at residues 2576 to 2673 (RNEM…VLEA), 2725 to 2789 (FKTL…RLEK), 2792 to 2905 (QEWE…RLKK), and 2926 to 3032 (QRLQ…AVRN). The WW domain maps to 3047 to 3081 (QSVTLPWQRAISKSNLLPYYIEQTSEKTQWEHPVW). A ZZ-type zinc finger spans residues 3301–3357 (KHASKCNVCKMFPIIGIRYRCLTCFNCDLCQNCFFSQRTAKSHRTNHPMQEYCEKTT). Positions 3306, 3309, 3321, 3324, 3330, 3333, 3343, and 3347 each coordinate Zn(2+). Disordered stretches follow at residues 3481-3522 (STME…TQSQ) and 3568-3645 (KQQA…QMQN). The segment covering 3568–3579 (KQQAPLSTNSLL) has biased composition (polar residues).

Component of the dystrophin glycoprotein complex (DGC). Interacts with dyb-1 and stn-1 to form the DGC. Interacts with stn-2. As to expression, expressed in body wall, head, pharyngeal and vulval muscles, from late embryogenesis to adulthood (at protein level).

The protein localises to the cell membrane. It localises to the sarcolemma. The protein resides in the cytoplasm. Its subcellular location is the cytoskeleton. Functionally, plays a role in cholinergic transmission and as a functional partner of dystrobrevin (dyb-1), necessary for muscle maintenance. Required for neuronal positioning. May play a role in the localization of slo-1 near dense bodies in the muscle. The chain is Dystrophin-1 (dys-1) from Caenorhabditis elegans.